Here is a 126-residue protein sequence, read N- to C-terminus: MASASTQPAALSAEQAKVVLAEVIQAFSAPENAVRMDEARDNACNDMGKMLQFVLPVATQIQQEVIKAYGFSCDGEGVLKFARLVKSYEAQDPEIASLSGKLKALFLPPMTLPPHGPAAGGSVAAS.

A2 carries the N-acetylalanine modification.

It belongs to the UPF0456 family. As to expression, ubiquitously expressed, with higher expression in lung and fetal brain.

It localises to the cytoplasm. Functionally, in brain, may be required for corpus callosum development. The polypeptide is Protein C10 (C12orf57) (Homo sapiens (Human)).